We begin with the raw amino-acid sequence, 787 residues long: Serine proteinase stubble (787 aa).

The segment at 1-22 (MKQPTLIRPRLRHRRSTPAAAT) is disordered. Residues 1 to 58 (MKQPTLIRPRLRHRRSTPAAATKMCPKRHWLVNNRAAGSRGSGGAAARSRRSLDQIVE) lie on the Cytoplasmic side of the membrane. Residues 59–80 (VLVALIVVNCLATAAAALITPP) form a helical; Signal-anchor for type II membrane protein membrane-spanning segment. Topologically, residues 81 to 787 (DSLESLGSLG…FTPWILEHVR (707 aa)) are extracellular. The N-linked (GlcNAc...) asparagine glycan is linked to asparagine 177. The interval 225-516 (AGTLVIRPSG…EISDSSIPDA (292 aa)) is disordered. 5 stretches are compositionally biased toward low complexity: residues 262 to 280 (SASH…NPNS), 287 to 303 (QQQQ…NHWQ), 358 to 368 (PSTSTSTTSTS), 393 to 438 (SLAA…RTTT), and 449 to 485 (TTAT…VTSS). A compositionally biased stretch (polar residues) spans 502 to 512 (GIETNEISDSS). 2 cysteine pairs are disulfide-bonded: cysteine 532–cysteine 660 and cysteine 575–cysteine 591. Residues 544–787 (IVGGKSAAFG…FTPWILEHVR (244 aa)) form the Peptidase S1 domain. Residues histidine 590 and aspartate 640 each act as charge relay system in the active site. N-linked (GlcNAc...) asparagine glycosylation is present at asparagine 672. 2 cysteine pairs are disulfide-bonded: cysteine 704-cysteine 723 and cysteine 734-cysteine 763. Residue serine 738 is the Charge relay system of the active site.

The protein belongs to the peptidase S1 family. In terms of processing, may activate itself by proteolytic cleavage.

The protein localises to the membrane. Its function is as follows. Hormone dependent protease required for epithelial morphogenesis, including the formation of bristles, legs, and wings. Has a dual function, detaches imaginal disk cells from extracellular matrices through its extracellular proteolytic domain and transmits an outside-to-inside signal to its intracellular domain to modify the cytoskeleton during morphogenesis. The polypeptide is Serine proteinase stubble (Sb) (Drosophila melanogaster (Fruit fly)).